A 452-amino-acid polypeptide reads, in one-letter code: MQVNETLSEGLKHEFQISIPAAEIDAKVNERLAGMKDKVRLNGFRPGKVPVAHLKKVYGKSVAAETLEETIRETNQKIFTDRGFRLANEAKVTMPTDQAEIEGILDGKKDLTYSVAIEVVPPITLADFKTFKVEKLVADVTDAEVDDAIKRIADQNRPYAPKSEGAKAENGDRVTLAFKGTIDGEAFEGGSGENIPLVLGSNSFIPGFEDQLTGIGVGETRVIKVPFPKNYGAAHLAGKDAEFETTATLIEAPQDATIDDEFAKTLGVESLDKLKEAMRERLTQEYAGATRQKLKRELLDRLDETHKFDPPESLVNDEFDLMWKSIHAEMESAGKTFADEDTTEDEAKTEYRKIADRRVRLGLVLSEIGDKNKITVTDDEVSRAVIERARQMPGREKEVWDYYRSNPGAVAQLRAPIFEDKVVDFILELAEVSEKKVSREELFKEEDDKAAA.

The PPIase FKBP-type domain occupies 171 to 256; it reads GDRVTLAFKG…ATLIEAPQDA (86 aa).

It belongs to the FKBP-type PPIase family. Tig subfamily.

The protein localises to the cytoplasm. It carries out the reaction [protein]-peptidylproline (omega=180) = [protein]-peptidylproline (omega=0). In terms of biological role, involved in protein export. Acts as a chaperone by maintaining the newly synthesized protein in an open conformation. Functions as a peptidyl-prolyl cis-trans isomerase. This Afipia carboxidovorans (strain ATCC 49405 / DSM 1227 / KCTC 32145 / OM5) (Oligotropha carboxidovorans) protein is Trigger factor.